Consider the following 434-residue polypeptide: Glutamyl-tRNA reductase (434 aa).

Substrate is bound by residues 52-55, S115, 120-122, and Q126; these read TCNR and ETQ. C53 acts as the Nucleophile in catalysis. Residue 195–200 coordinates NADP(+); sequence GAGEMI.

It belongs to the glutamyl-tRNA reductase family. Homodimer.

It catalyses the reaction (S)-4-amino-5-oxopentanoate + tRNA(Glu) + NADP(+) = L-glutamyl-tRNA(Glu) + NADPH + H(+). It functions in the pathway porphyrin-containing compound metabolism; protoporphyrin-IX biosynthesis; 5-aminolevulinate from L-glutamyl-tRNA(Glu): step 1/2. In terms of biological role, catalyzes the NADPH-dependent reduction of glutamyl-tRNA(Glu) to glutamate 1-semialdehyde (GSA). The polypeptide is Glutamyl-tRNA reductase (Cupriavidus pinatubonensis (strain JMP 134 / LMG 1197) (Cupriavidus necator (strain JMP 134))).